We begin with the raw amino-acid sequence, 154 residues long: Aspartate carbamoyltransferase regulatory chain (154 aa).

Positions 109, 114, 138, and 141 each coordinate Zn(2+).

Belongs to the PyrI family. Contains catalytic and regulatory chains. The cofactor is Zn(2+).

Its function is as follows. Involved in allosteric regulation of aspartate carbamoyltransferase. This is Aspartate carbamoyltransferase regulatory chain from Methanothrix thermoacetophila (strain DSM 6194 / JCM 14653 / NBRC 101360 / PT) (Methanosaeta thermophila).